The primary structure comprises 428 residues: Enolase (428 aa).

Q163 is a binding site for (2R)-2-phosphoglycerate. E205 functions as the Proton donor in the catalytic mechanism. Mg(2+) is bound by residues D242, E286, and D313. Residues K338, R367, S368, and K389 each coordinate (2R)-2-phosphoglycerate. K338 acts as the Proton acceptor in catalysis.

The protein belongs to the enolase family. Mg(2+) is required as a cofactor.

The protein localises to the cytoplasm. The protein resides in the secreted. Its subcellular location is the cell surface. It carries out the reaction (2R)-2-phosphoglycerate = phosphoenolpyruvate + H2O. The protein operates within carbohydrate degradation; glycolysis; pyruvate from D-glyceraldehyde 3-phosphate: step 4/5. In terms of biological role, catalyzes the reversible conversion of 2-phosphoglycerate (2-PG) into phosphoenolpyruvate (PEP). It is essential for the degradation of carbohydrates via glycolysis. The polypeptide is Enolase (Geobacter sulfurreducens (strain ATCC 51573 / DSM 12127 / PCA)).